A 207-amino-acid polypeptide reads, in one-letter code: Large ribosomal subunit protein uL4 (207 aa).

The disordered stretch occupies residues 54–76 (RSAVRGGGRKPWRQKGTGRARQG). The span at 60 to 71 (GGRKPWRQKGTG) shows a compositional bias: basic residues.

The protein belongs to the universal ribosomal protein uL4 family. As to quaternary structure, part of the 50S ribosomal subunit.

Functionally, one of the primary rRNA binding proteins, this protein initially binds near the 5'-end of the 23S rRNA. It is important during the early stages of 50S assembly. It makes multiple contacts with different domains of the 23S rRNA in the assembled 50S subunit and ribosome. Its function is as follows. Forms part of the polypeptide exit tunnel. The sequence is that of Large ribosomal subunit protein uL4 from Staphylococcus haemolyticus (strain JCSC1435).